The chain runs to 542 residues: MNKPFLILLIALIVFSGCNMRKYFKPAKHQIKGEAYFPNHLQESIVSSNRYGAILKNGAVIGDKGLTQLRIGKNFNYESSFLNESQGFFILAQDCLNKIDKKTNKSKVAKTEETELKLKGVEAEVQDKVCHQVELISNNPNASQQSIVIPLETFALSASVKGNLLAVVLADNSANLYDITSQKLLFSEKGSPSTTINSLMAMPIFMDTVVVFPMLDGRLLVVDYVHGNPTPIRNIVISSDKFFNNITYLIVDGNNMIASTGKRILSVVSGQEFNYDGDIVDLLYDKGTLYVLTLDGQILQMDKSLRELNSVKLPSSLNTIVLNHNKLYSLEKRGYVIEVDLNDFDSYNVYKTPTIGSFKFFSSNRLDKGVFYDKNRVYYDRYYLDYNDFKPKLYPVVEKSASKKSQKGEKGNAPIYLQERHKAKENKQPLEENKVKPRNSGFEEEEVKTRRPEPIRDQNNATQQGETKNNESKNAPVLKENAAKKEVPKPNSKEEKRRLKEEKKKAKAEQRAREFEQRAREHQERDEKELEERRKALEMNKK.

The segment at 399–542 (KSASKKSQKG…RRKALEMNKK (144 aa)) is disordered. Basic and acidic residues-rich tracts occupy residues 418–435 (QERH…ENKV) and 447–456 (VKTRRPEPIR). Positions 457–467 (DQNNATQQGET) are enriched in polar residues. A compositionally biased stretch (basic and acidic residues) spans 481 to 542 (NAAKKEVPKP…RRKALEMNKK (62 aa)).

The protein localises to the cell surface. Its function is as follows. Binds plasminogen, specifically, and in a concentration and lysine-dependent manner. Plasminogen is the precursor of plasmin, a serine protease that cleaves fibrin, fibronectin, laminin and vitronectin. Acquisition of plasminogen/plasmin could enable H.pylori to degrade host components. The chain is Plasminogen-binding protein PgbB (pgbB) from Helicobacter pylori (strain ATCC 700392 / 26695) (Campylobacter pylori).